Reading from the N-terminus, the 348-residue chain is MRVLTIFLLFMTSIFAVQIKDVANTVGVRDNQLIGYGLVVGLNGSGDGTSSKFTLQSISNLLQGMNIKVDPNDIKSKNTAAVMVTAKLPAFAKSGDKLDITVSSMGDAKSLQGGTLLLTALRGIDGEIYAIAQGSISTGGLTPRPGGAGSHSTAATVMGGANVEREIPQNFSQNNDLTLSLKVADFKTANDIERVLNTVFGEEVAKAIDSRTVKLKKPEDLSNVDFMARVLEQDIAYKPQSKVIIDERTGTVIAGVDVEVEPVLITHKDITIKIDPNNNAVANQNEIDMKDGGFVDPSSNTLRINNAKSTVANIARMLNKLGATPNDIIAIMENLKRAGAINADLEII.

The signal sequence occupies residues Met-1–Ala-16.

The protein belongs to the FlgI family. The basal body constitutes a major portion of the flagellar organelle and consists of four rings (L,P,S, and M) mounted on a central rod.

The protein resides in the periplasm. It localises to the bacterial flagellum basal body. Functionally, assembles around the rod to form the L-ring and probably protects the motor/basal body from shearing forces during rotation. The polypeptide is Flagellar P-ring protein (Campylobacter jejuni subsp. jejuni serotype O:6 (strain 81116 / NCTC 11828)).